The chain runs to 257 residues: Flagellar brake protein YcgR 2 (257 aa).

The 114-residue stretch at 131–244 folds into the PilZ domain; the sequence is QRREFFRVQT…AERTLQRVVT (114 aa).

This sequence belongs to the YcgR family. In terms of assembly, monomer. Interacts with the flagellar basal bodies.

The protein resides in the bacterial flagellum basal body. Acts as a flagellar brake, regulating swimming and swarming in a bis-(3'-5') cyclic diguanylic acid (c-di-GMP)-dependent manner. Binds 1 c-di-GMP dimer per subunit. Increasing levels of c-di-GMP lead to decreased motility. In Paraburkholderia phytofirmans (strain DSM 17436 / LMG 22146 / PsJN) (Burkholderia phytofirmans), this protein is Flagellar brake protein YcgR 2.